The chain runs to 381 residues: Major structural protein ORF14 (381 aa).

The stretch at Arg287–Glu307 forms a coiled coil.

This Helicobacter pylori (strain 35A) protein is Major structural protein ORF14.